A 215-amino-acid chain; its full sequence is Ras-related protein Rab-42 (215 aa).

Positions 19, 21, 22, 23, and 44 each coordinate GTP. 3 residues coordinate Mg(2+): Thr23, Thr44, and Asp68. GTP-binding residues include Gly71, Lys128, Asp130, Ala157, and Lys158. The disordered stretch occupies residues 196 to 215 (HRSPNPRSSSRKQDSGTCQC). S-geranylgeranyl cysteine attachment occurs at residues Cys213 and Cys215.

It belongs to the small GTPase superfamily. Rab family. Mg(2+) is required as a cofactor.

The protein localises to the membrane. The enzyme catalyses GTP + H2O = GDP + phosphate + H(+). Regulated by guanine nucleotide exchange factors (GEFs) which promote the exchange of bound GDP for free GTP. Regulated by GTPase activating proteins (GAPs) which increase the GTP hydrolysis activity. Inhibited by GDP dissociation inhibitors (GDIs). In terms of biological role, the small GTPases Rab are key regulators of intracellular membrane trafficking, from the formation of transport vesicles to their fusion with membranes. Rabs cycle between an inactive GDP-bound form and an active GTP-bound form that is able to recruit to membranes different sets of downstream effectors directly responsible for vesicle formation, movement, tethering and fusion. The physiological function of RAB42 remains undefined. This is Ras-related protein Rab-42 from Mus musculus (Mouse).